We begin with the raw amino-acid sequence, 388 residues long: Type II secretion system protein F (388 aa).

The segment at Met1 to Thr28 is disordered. Topologically, residues Met1–Met153 are cytoplasmic. The Ca(2+) site is built by Glu79, Asn133, and Asp137. The chain crosses the membrane as a helical span at residues Ile154–Val174. Residues Val175–His205 are Periplasmic-facing. Residues Tyr206 to Thr226 form a helical membrane-spanning segment. Residues Asp227 to Asn350 lie on the Cytoplasmic side of the membrane. A helical membrane pass occupies residues Ile351–Ile371. The Periplasmic portion of the chain corresponds to Val372 to Leu388.

This sequence belongs to the GSP F family. As to quaternary structure, type II secretion system is composed of four main components: the outer membrane complex, the inner membrane complex, the cytoplasmic secretion ATPase and the periplasm-spanning pseudopilus. Homodimer. Interacts with ExeE and ExeL components.

The protein resides in the cell inner membrane. Functionally, component of the type II secretion system inner membrane complex required for the energy-dependent secretion of extracellular factors such as proteases and toxins from the periplasm. The chain is Type II secretion system protein F (exeF) from Aeromonas hydrophila.